Reading from the N-terminus, the 248-residue chain is Large ribosomal subunit protein uL4 (248 aa).

2 disordered regions span residues 72 to 103 (RSENVARRVPNAVSGRAAHPPKAEKDQTKSLN) and 173 to 210 (GRSVRAGRGKTRGRKYSQPKSVLVVTSEEPSRAARNLS). Basic and acidic residues predominate over residues 92 to 103 (PKAEKDQTKSLN). Positions 177–189 (RAGRGKTRGRKYS) are enriched in basic residues.

Belongs to the universal ribosomal protein uL4 family. In terms of assembly, part of the 50S ribosomal subunit.

One of the primary rRNA binding proteins, this protein initially binds near the 5'-end of the 23S rRNA. It is important during the early stages of 50S assembly. It makes multiple contacts with different domains of the 23S rRNA in the assembled 50S subunit and ribosome. Its function is as follows. Forms part of the polypeptide exit tunnel. In Halorubrum lacusprofundi (strain ATCC 49239 / DSM 5036 / JCM 8891 / ACAM 34), this protein is Large ribosomal subunit protein uL4.